The sequence spans 305 residues: Aspartate carbamoyltransferase catalytic subunit (305 aa).

Residues arginine 51 and threonine 52 each contribute to the carbamoyl phosphate site. Lysine 79 is a binding site for L-aspartate. The carbamoyl phosphate site is built by arginine 101, histidine 129, and glutamine 132. Residues arginine 165 and arginine 220 each coordinate L-aspartate. Carbamoyl phosphate-binding residues include glycine 258 and proline 259.

This sequence belongs to the aspartate/ornithine carbamoyltransferase superfamily. ATCase family. Heterododecamer (2C3:3R2) of six catalytic PyrB chains organized as two trimers (C3), and six regulatory PyrI chains organized as three dimers (R2).

It catalyses the reaction carbamoyl phosphate + L-aspartate = N-carbamoyl-L-aspartate + phosphate + H(+). The protein operates within pyrimidine metabolism; UMP biosynthesis via de novo pathway; (S)-dihydroorotate from bicarbonate: step 2/3. Its function is as follows. Catalyzes the condensation of carbamoyl phosphate and aspartate to form carbamoyl aspartate and inorganic phosphate, the committed step in the de novo pyrimidine nucleotide biosynthesis pathway. The sequence is that of Aspartate carbamoyltransferase catalytic subunit from Rubrobacter xylanophilus (strain DSM 9941 / JCM 11954 / NBRC 16129 / PRD-1).